Reading from the N-terminus, the 104-residue chain is Large ribosomal subunit protein bL21 (104 aa).

This sequence belongs to the bacterial ribosomal protein bL21 family. Part of the 50S ribosomal subunit. Contacts protein L20.

This protein binds to 23S rRNA in the presence of protein L20. The protein is Large ribosomal subunit protein bL21 of Salinispora tropica (strain ATCC BAA-916 / DSM 44818 / JCM 13857 / NBRC 105044 / CNB-440).